Reading from the N-terminus, the 188-residue chain is Calcium load-activated calcium channel (188 aa).

Over 1–4 (MSTM) the chain is Lumenal. A helical transmembrane segment spans residues 5–32 (FADTILIVFISICTALLAEGITWVLVYR). Positions 32–89 (RTDKYKRLKAEVEKQSKKLEKKKETITESAGRQQKKKIERQEEKLKNNNRDLSMVRMK) form a coiled coil. The Cytoplasmic portion of the chain corresponds to 33–86 (TDKYKRLKAEVEKQSKKLEKKKETITESAGRQQKKKIERQEEKLKNNNRDLSMV). Residues 87–106 (RMKSMFAIGFCFTALMGMFN) traverse the membrane as a helical segment. The Lumenal segment spans residues 107–120 (SIFDGRVVAKLPFV). An intramembrane segment occupies 121 to 130 (PLSYIQGLSH). The Lumenal portion of the chain corresponds to 131-140 (RNLLGEDYTD). The chain crosses the membrane as a helical span at residues 141 to 162 (CSFIFLYILCTMSIRQNIQKML). Topologically, residues 163–188 (GLAPSRAATKQAGGFLGPPPQAAKFS) are cytoplasmic.

The protein belongs to the TMCO1 family. As to quaternary structure, homodimer and homotetramer. Component of the multi-pass translocon (MPT) complex.

It localises to the endoplasmic reticulum membrane. Its subcellular location is the golgi apparatus membrane. Calcium-selective channel required to prevent calcium stores from overfilling, thereby playing a key role in calcium homeostasis. In response to endoplasmic reticulum (ER) overloading, assembles into a homotetramer, forming a functional calcium-selective channel, regulating the calcium content in endoplasmic reticulum store. Component of the multi-pass translocon (MPT) complex that mediates insertion of multi-pass membrane proteins into the lipid bilayer of membranes. This is Calcium load-activated calcium channel from Danio rerio (Zebrafish).